The chain runs to 394 residues: Teichoic acid poly(glycerol phosphate) polymerase (394 aa).

It belongs to the CDP-glycerol glycerophosphotransferase family.

The protein resides in the cell membrane. The enzyme catalyses 4-O-[(2R)-glycerylphospho]-N-acetyl-beta-D-mannosaminyl-(1-&gt;4)-N-acetyl-alpha-D-glucosaminyl di-trans,octa-cis-undecaprenyl diphosphate + n CDP-glycerol = 4-O-{[(2R)-1-glycerylphospho](n)-(2R)-1-glycerylphospho}-N-acetyl-beta-D-mannosaminyl-(1-&gt;4)-N-acetyl-alpha-D-glucosaminyl undecaprenyl diphosphate + n CMP + n H(+). Functionally, catalyzes the addition of further 2-8 glycerol phosphate units from CDP-glycerol to the single glycerol phosphate unit bound to the prenolpyrophosphate-linked disaccharide. The function in the cell is unknown since the product is not part of the poly(ribitol phosphate) teichoic acid found in the cell walls. This chain is Teichoic acid poly(glycerol phosphate) polymerase (tarF), found in Bacillus spizizenii (strain ATCC 23059 / NRRL B-14472 / W23) (Bacillus subtilis subsp. spizizenii).